The following is a 547-amino-acid chain: MFS-type transporter M6 (547 aa).

A disordered region spans residues 1–45 (MHRRRRDNLMTPAEMVASMKPPQSLSTEDDDGSRRDSESSADVLK). Residues 81–101 (VLVVASFAAAISPFSTSTYYP) traverse the membrane as a helical segment. N-linked (GlcNAc...) asparagine glycosylation is present at asparagine 118. A helical transmembrane segment spans residues 146–166 (PMFLVCFAIYFVANVGLALQN). An N-linked (GlcNAc...) asparagine glycan is attached at asparagine 167. 2 helical membrane-spanning segments follow: residues 206 to 226 (LIYA…IGGL) and 236 to 256 (VFWF…IFFG). Residue asparagine 274 is glycosylated (N-linked (GlcNAc...) asparagine). Helical transmembrane passes span 317-337 (FILS…TSVL), 347-367 (YDAV…LLAY), 407-427 (LGFV…YGWQ), 432-452 (APLA…TGVM), and 469-489 (AVGA…VAVV). A glycan (N-linked (GlcNAc...) asparagine) is linked at asparagine 493. A helical membrane pass occupies residues 496–516 (AGIGWTATVTAGLWVLMMPTL).

This sequence belongs to the major facilitator superfamily. CAR1 family.

The protein resides in the membrane. Functionally, MFS-type transporter; part of the gene cluster that mediates the biosynthesis of squalestatin S1 (SQS1, also known as zaragozic acid A), a heavily oxidized fungal polyketide that offers potent cholesterol lowering activity by targeting squalene synthase (SS). This chain is MFS-type transporter M6, found in Phoma sp. (strain ATCC 20986 / MF5453).